An 81-amino-acid chain; its full sequence is MRTTIDVAGRLVIPKRIRERLGLRGNDQVEITERDGRIEIEPAPTGVELVREGSVLVARPERPLPPLTDEIVRETLDRTRR.

In terms of domain architecture, SpoVT-AbrB spans 1–45; that stretch reads MRTTIDVAGRLVIPKRIRERLGLRGNDQVEITERDGRIEIEPAPT.

It to B.subtilis SpoVT.

This is an uncharacterized protein from Mycobacterium bovis (strain ATCC BAA-935 / AF2122/97).